Reading from the N-terminus, the 220-residue chain is Ribose-5-phosphate isomerase A (220 aa).

Substrate contacts are provided by residues 28-31 (TGST), 81-84 (DGAD), and 94-97 (KGGG). Glu103 acts as the Proton acceptor in catalysis. Lys121 provides a ligand contact to substrate.

The protein belongs to the ribose 5-phosphate isomerase family. As to quaternary structure, homodimer.

The catalysed reaction is aldehydo-D-ribose 5-phosphate = D-ribulose 5-phosphate. Its pathway is carbohydrate degradation; pentose phosphate pathway; D-ribose 5-phosphate from D-ribulose 5-phosphate (non-oxidative stage): step 1/1. Catalyzes the reversible conversion of ribose-5-phosphate to ribulose 5-phosphate. The protein is Ribose-5-phosphate isomerase A of Shewanella putrefaciens (strain CN-32 / ATCC BAA-453).